We begin with the raw amino-acid sequence, 206 residues long: Urease accessory protein UreG (206 aa).

Residue 14–21 participates in GTP binding; sequence GPVGSGKT.

It belongs to the SIMIBI class G3E GTPase family. UreG subfamily. Homodimer. UreD, UreF and UreG form a complex that acts as a GTP-hydrolysis-dependent molecular chaperone, activating the urease apoprotein by helping to assemble the nickel containing metallocenter of UreC. The UreE protein probably delivers the nickel.

It is found in the cytoplasm. Its function is as follows. Facilitates the functional incorporation of the urease nickel metallocenter. This process requires GTP hydrolysis, probably effectuated by UreG. The sequence is that of Urease accessory protein UreG from Brucella anthropi (strain ATCC 49188 / DSM 6882 / CCUG 24695 / JCM 21032 / LMG 3331 / NBRC 15819 / NCTC 12168 / Alc 37) (Ochrobactrum anthropi).